The sequence spans 218 residues: C-type lectin domain family 2 member H (218 aa).

Topologically, residues 1-52 (MNAAKVETSSMGMLQRADLTAADCLQEGEMGKKIQGKCFRIISTVSPVKLYC) are cytoplasmic. Residues 53–73 (CYGVIMVLTVAVIALSVALSV) form a helical; Signal-anchor for type II membrane protein membrane-spanning segment. Over 74-218 (RNKIPAMEDR…SRVGSVPRHV (145 aa)) the chain is Extracellular. Residues cysteine 90 and cysteine 101 are joined by a disulfide bond. The region spanning 97–201 (FGSKCFYFSE…SYTHRKWICS (105 aa)) is the C-type lectin domain. Asparagine 110 carries N-linked (GlcNAc...) asparagine glycosylation. Cysteines 118 and 200 form a disulfide.

Detected in ileum, liver, kidney and in IL2-activated natural killer cells.

The protein resides in the cell membrane. Functionally, lectin-type cell surface receptor. The polypeptide is C-type lectin domain family 2 member H (Clec2h) (Mus musculus (Mouse)).